Reading from the N-terminus, the 542-residue chain is Chaperonin GroEL (542 aa).

ATP is bound by residues 29 to 32 (TLGP), 86 to 90 (DGTTT), glycine 413, 476 to 478 (NAA), and aspartate 492.

This sequence belongs to the chaperonin (HSP60) family. As to quaternary structure, forms a cylinder of 14 subunits composed of two heptameric rings stacked back-to-back. Interacts with the co-chaperonin GroES.

It localises to the cytoplasm. It carries out the reaction ATP + H2O + a folded polypeptide = ADP + phosphate + an unfolded polypeptide.. Its function is as follows. Together with its co-chaperonin GroES, plays an essential role in assisting protein folding. The GroEL-GroES system forms a nano-cage that allows encapsulation of the non-native substrate proteins and provides a physical environment optimized to promote and accelerate protein folding. This is Chaperonin GroEL from Lactococcus lactis subsp. lactis (strain IL1403) (Streptococcus lactis).